The chain runs to 349 residues: Insulin gene enhancer protein ISL-1 (349 aa).

2 LIM zinc-binding domains span residues 17-70 and 79-133; these read CVGC…CKRD and CAKC…RADH. Positions 181–240 form a DNA-binding region, homeobox; the sequence is TTRVRTVLNEKQLHTLRTCYAANPRPDALMKEQLVEMTGLSPRVIRVWFQNKRCKDKKRS. The segment at 312 to 349 is disordered; that stretch reads VNFSEGGPGSNSTGSEVASMSSQLPDTPNSMVASPIEA. Residues 321–343 show a composition bias toward polar residues; sequence SNSTGSEVASMSSQLPDTPNSMV.

It localises to the nucleus. Functionally, acts as a transcriptional regulator. Recognizes and binds to the consensus octamer binding site 5'-ATAATTAA-3' in promoter of target genes. Plays a fundamental role in the gene regulatory network essential for retinal ganglion cell (RGC) differentiation. Binds to insulin gene enhancer sequences. Defines subclasses of motoneurons that segregate into columns in the spinal cord and select distinct axon pathways. Acts in conjunction with LHX1, LHX3 and ISL2. Binds to insulin gene enhancer sequences. Essential for heart development. This chain is Insulin gene enhancer protein ISL-1 (ISL1), found in Gallus gallus (Chicken).